A 145-amino-acid chain; its full sequence is Large ribosomal subunit protein uL13 (145 aa).

The protein belongs to the universal ribosomal protein uL13 family. Part of the 50S ribosomal subunit.

This protein is one of the early assembly proteins of the 50S ribosomal subunit, although it is not seen to bind rRNA by itself. It is important during the early stages of 50S assembly. This Geobacillus thermodenitrificans (strain NG80-2) protein is Large ribosomal subunit protein uL13.